Reading from the N-terminus, the 118-residue chain is Peptidyl-prolyl cis-trans isomerase Pin1 (118 aa).

Disordered stretches follow at residues 1–37 (MSSE…ATTR) and 61–84 (LASR…GRGQ). The 116-residue stretch at 3–118 (SEKVRASHIL…SGVHIIKRTG (116 aa)) folds into the PpiC domain. A compositionally biased stretch (basic residues) spans 12–22 (LIKHQGSRRKS).

Belongs to the PpiC/parvulin rotamase family. The N-terminus is blocked. In terms of tissue distribution, expressed in roots, stems, leaves, flowers and seedlings.

It localises to the cytoplasm. The protein resides in the nucleus. It catalyses the reaction [protein]-peptidylproline (omega=180) = [protein]-peptidylproline (omega=0). Its activity is regulated as follows. Inhibited in vitro by juglone. In terms of biological role, prolyl cis/trans isomerase with specificity for phospho-Ser-Pro bonds. In Digitalis lanata (Grecian foxglove), this protein is Peptidyl-prolyl cis-trans isomerase Pin1 (PARV12.8).